Consider the following 824-residue polypeptide: Acyl-homoserine lactone acylase QuiP (824 aa).

Residues 1-26 (MASPALRHFLPRFGAAAAAASFLSLA) form the signal peptide. The active-site Nucleophile is the Ser-264.

This sequence belongs to the peptidase S45 family. Heterodimer of an alpha subunit and a beta subunit processed from the same precursor.

The protein localises to the periplasm. The enzyme catalyses an N-acyl-L-homoserine lactone + H2O = L-homoserine lactone + a carboxylate. In terms of biological role, catalyzes the deacylation of acyl-homoserine lactone (AHL or acyl-HSL), releasing homoserine lactone (HSL) and the corresponding fatty acid. Possesses a specificity for the degradation of long-chain acyl-HSLs (side chains of seven or more carbons in length). This is Acyl-homoserine lactone acylase QuiP (quiP) from Pseudomonas syringae pv. tomato (strain ATCC BAA-871 / DC3000).